The primary structure comprises 470 residues: Serine carboxypeptidase ctsa-4.1 (470 aa).

Positions 1–19 (MKLLSILFIFVSSYSFCLA) are cleaved as a signal peptide. Asn132 carries an N-linked (GlcNAc...) asparagine glycan. Residue Ser169 is part of the active site. The N-linked (GlcNAc...) asparagine glycan is linked to Asn316. Residue Asp380 is part of the active site. An N-linked (GlcNAc...) asparagine glycan is attached at Asn396. His441 is an active-site residue.

It belongs to the peptidase S10 family.

It catalyses the reaction Release of a C-terminal amino acid with broad specificity.. The sequence is that of Serine carboxypeptidase ctsa-4.1 from Caenorhabditis elegans.